The sequence spans 333 residues: tRNA N6-adenosine threonylcarbamoyltransferase (333 aa).

2 residues coordinate Fe cation: histidine 111 and histidine 115. Substrate is bound by residues 134–138 (LVSGG), aspartate 167, glycine 180, and asparagine 272. Aspartate 300 contributes to the Fe cation binding site.

The protein belongs to the KAE1 / TsaD family. Fe(2+) is required as a cofactor.

The protein localises to the cytoplasm. The enzyme catalyses L-threonylcarbamoyladenylate + adenosine(37) in tRNA = N(6)-L-threonylcarbamoyladenosine(37) in tRNA + AMP + H(+). Functionally, required for the formation of a threonylcarbamoyl group on adenosine at position 37 (t(6)A37) in tRNAs that read codons beginning with adenine. Is involved in the transfer of the threonylcarbamoyl moiety of threonylcarbamoyl-AMP (TC-AMP) to the N6 group of A37, together with TsaE and TsaB. TsaD likely plays a direct catalytic role in this reaction. The sequence is that of tRNA N6-adenosine threonylcarbamoyltransferase from Legionella pneumophila (strain Paris).